We begin with the raw amino-acid sequence, 102 residues long: Mini zinc finger protein 1 (102 aa).

Basic residues predominate over residues 1–13 (MMKKRQMVIKQRS). Positions 1–34 (MMKKRQMVIKQRSRNSNTSSSWTTTSSSSSSSEI) are disordered. The span at 14 to 32 (RNSNTSSSWTTTSSSSSSS) shows a compositional bias: low complexity. A ZF-HD dimerization-type; degenerate zinc finger spans residues 39-88 (YVECQKNHAANIGGYAVDGCREFMAAGVEGTVDALRCAACGCHRNFHRKE).

In terms of assembly, homo- and heterodimers. Interacts with ZHD1, ZHD5, ZHD6, ZHD7, ZHD8, ZHD10 and ZHD13. As to expression, mostly expressed in roots and stems, present in siliques and seedlings, and weakly observed in petioles, leaves and flowers.

Its subcellular location is the cytoplasm. Functionally, inhibits zinc finger homeodomain (ZHD) transcription factors, such as ZHD5, by interacting with them to prevent both their nuclear localization and their DNA-binding properties. Involved in integrating signals from multiple hormones by preventing the expression of genes involved in gibberellic acid (GA), auxin and brassinosteroid signaling and by promoting the expression of abscisic acid (ABA)-responsive genes. Regulates several development aspects, including photomorphogenesis, apical dominance, longevity, flower morphology and fertility, as well as root and stem elongation. Promotes the formation of ectopic shoot meristems on leaf margins. This chain is Mini zinc finger protein 1 (MIF1), found in Arabidopsis thaliana (Mouse-ear cress).